We begin with the raw amino-acid sequence, 125 residues long: Ribosome-binding factor A (125 aa).

Belongs to the RbfA family. Monomer. Binds 30S ribosomal subunits, but not 50S ribosomal subunits or 70S ribosomes.

The protein localises to the cytoplasm. In terms of biological role, one of several proteins that assist in the late maturation steps of the functional core of the 30S ribosomal subunit. Associates with free 30S ribosomal subunits (but not with 30S subunits that are part of 70S ribosomes or polysomes). Required for efficient processing of 16S rRNA. May interact with the 5'-terminal helix region of 16S rRNA. This is Ribosome-binding factor A from Paracidovorax citrulli (strain AAC00-1) (Acidovorax citrulli).